We begin with the raw amino-acid sequence, 539 residues long: Eukaryotic translation initiation factor 3 subunit L (539 aa).

Positions 306 to 514 (TFSDILLYVQ…IHIADTKVSH (209 aa)) constitute a PCI domain.

Belongs to the eIF-3 subunit L family. As to quaternary structure, component of the eukaryotic translation initiation factor 3 (eIF-3) complex. The eIF-3 complex interacts with pix.

It localises to the cytoplasm. Component of the eukaryotic translation initiation factor 3 (eIF-3) complex, which is involved in protein synthesis of a specialized repertoire of mRNAs and, together with other initiation factors, stimulates binding of mRNA and methionyl-tRNAi to the 40S ribosome. The eIF-3 complex specifically targets and initiates translation of a subset of mRNAs involved in cell proliferation. This chain is Eukaryotic translation initiation factor 3 subunit L, found in Drosophila willistoni (Fruit fly).